A 285-amino-acid chain; its full sequence is Bifunctional protein FolD (285 aa).

NADP(+) contacts are provided by residues 166–168 (GAS) and Ile232.

Belongs to the tetrahydrofolate dehydrogenase/cyclohydrolase family. Homodimer.

It carries out the reaction (6R)-5,10-methylene-5,6,7,8-tetrahydrofolate + NADP(+) = (6R)-5,10-methenyltetrahydrofolate + NADPH. The catalysed reaction is (6R)-5,10-methenyltetrahydrofolate + H2O = (6R)-10-formyltetrahydrofolate + H(+). The protein operates within one-carbon metabolism; tetrahydrofolate interconversion. Catalyzes the oxidation of 5,10-methylenetetrahydrofolate to 5,10-methenyltetrahydrofolate and then the hydrolysis of 5,10-methenyltetrahydrofolate to 10-formyltetrahydrofolate. The polypeptide is Bifunctional protein FolD (Aliivibrio salmonicida (strain LFI1238) (Vibrio salmonicida (strain LFI1238))).